The sequence spans 121 residues: Large ribosomal subunit protein eL34A (121 aa).

This sequence belongs to the eukaryotic ribosomal protein eL34 family. In terms of assembly, component of the large ribosomal subunit (LSU). Mature yeast ribosomes consist of a small (40S) and a large (60S) subunit. The 40S small subunit contains 1 molecule of ribosomal RNA (18S rRNA) and 33 different proteins (encoded by 57 genes). The large 60S subunit contains 3 rRNA molecules (25S, 5.8S and 5S rRNA) and 46 different proteins (encoded by 81 genes).

It localises to the cytoplasm. Functionally, component of the ribosome, a large ribonucleoprotein complex responsible for the synthesis of proteins in the cell. The small ribosomal subunit (SSU) binds messenger RNAs (mRNAs) and translates the encoded message by selecting cognate aminoacyl-transfer RNA (tRNA) molecules. The large subunit (LSU) contains the ribosomal catalytic site termed the peptidyl transferase center (PTC), which catalyzes the formation of peptide bonds, thereby polymerizing the amino acids delivered by tRNAs into a polypeptide chain. The nascent polypeptides leave the ribosome through a tunnel in the LSU and interact with protein factors that function in enzymatic processing, targeting, and the membrane insertion of nascent chains at the exit of the ribosomal tunnel. This chain is Large ribosomal subunit protein eL34A, found in Saccharomyces cerevisiae (strain ATCC 204508 / S288c) (Baker's yeast).